A 36-amino-acid chain; its full sequence is Pancreatic polypeptide (36 aa).

At Tyr36 the chain carries Tyrosine amide.

This sequence belongs to the NPY family.

The protein resides in the secreted. Functionally, hormone secreted by pancreatic cells that acts as a regulator of pancreatic and gastrointestinal functions. In Meleagris gallopavo (Wild turkey), this protein is Pancreatic polypeptide (PPY).